We begin with the raw amino-acid sequence, 220 residues long: Uracil-DNA glycosylase (220 aa).

The active-site Proton acceptor is Asp65.

It belongs to the uracil-DNA glycosylase (UDG) superfamily. UNG family.

The protein resides in the cytoplasm. The enzyme catalyses Hydrolyzes single-stranded DNA or mismatched double-stranded DNA and polynucleotides, releasing free uracil.. Its function is as follows. Excises uracil residues from the DNA which can arise as a result of misincorporation of dUMP residues by DNA polymerase or due to deamination of cytosine. This chain is Uracil-DNA glycosylase, found in Amoebophilus asiaticus (strain 5a2).